Consider the following 466-residue polypeptide: Soluble pyridine nucleotide transhydrogenase (466 aa).

Residue 36-45 (ERYQNVGGGC) coordinates FAD.

It belongs to the class-I pyridine nucleotide-disulfide oxidoreductase family. In terms of assembly, homooligomer; probable homooctamer. Requires FAD as cofactor.

The protein resides in the cytoplasm. The enzyme catalyses NAD(+) + NADPH = NADH + NADP(+). Conversion of NADPH, generated by peripheral catabolic pathways, to NADH, which can enter the respiratory chain for energy generation. This Shigella flexneri protein is Soluble pyridine nucleotide transhydrogenase.